A 143-amino-acid chain; its full sequence is Nucleoside diphosphate kinase (143 aa).

ATP-binding residues include Lys-11, Phe-59, Arg-87, Thr-93, Arg-104, and Asn-114. Residue His-117 is the Pros-phosphohistidine intermediate of the active site.

It belongs to the NDK family. Homotetramer. The cofactor is Mg(2+).

It is found in the cytoplasm. It carries out the reaction a 2'-deoxyribonucleoside 5'-diphosphate + ATP = a 2'-deoxyribonucleoside 5'-triphosphate + ADP. The enzyme catalyses a ribonucleoside 5'-diphosphate + ATP = a ribonucleoside 5'-triphosphate + ADP. Its function is as follows. Major role in the synthesis of nucleoside triphosphates other than ATP. The ATP gamma phosphate is transferred to the NDP beta phosphate via a ping-pong mechanism, using a phosphorylated active-site intermediate. This chain is Nucleoside diphosphate kinase, found in Salmonella arizonae (strain ATCC BAA-731 / CDC346-86 / RSK2980).